Consider the following 836-residue polypeptide: Homeobox-leucine zipper protein ATHB-15 (836 aa).

Positions 14-77 form a DNA-binding region, homeobox; it reads DNGKYVRYTP…NRRCREKQRK (64 aa). The stretch at 72-115 forms a coiled coil; sequence REKQRKEASRLQAVNRKLTAMNKLLMEENDRLQKQVSQLVHENS. In terms of domain architecture, START spans 151–379; it reads RDASPAGLLS…IAQEVTQTNS (229 aa).

Belongs to the HD-ZIP homeobox family. Class III subfamily. As to quaternary structure, interacts with ESR1 and ESR2. Interacts with ZPR3. As to expression, highly expressed the developing vascular elements and the adaxial portion of cotyledons. Expressed in developing ovules, stamens and carpels. Expressed in procambium and shoot meristem.

The protein resides in the nucleus. Its function is as follows. Probable transcription factor involved in the regulation of meristem development to promote lateral organ formation. May regulates procambial and vascular tissue formation or maintenance, and vascular development in inflorescence stems. The protein is Homeobox-leucine zipper protein ATHB-15 (ATHB-15) of Arabidopsis thaliana (Mouse-ear cress).